The primary structure comprises 204 residues: Imidazoleglycerol-phosphate dehydratase (204 aa).

This sequence belongs to the imidazoleglycerol-phosphate dehydratase family.

It is found in the cytoplasm. The enzyme catalyses D-erythro-1-(imidazol-4-yl)glycerol 3-phosphate = 3-(imidazol-4-yl)-2-oxopropyl phosphate + H2O. Its pathway is amino-acid biosynthesis; L-histidine biosynthesis; L-histidine from 5-phospho-alpha-D-ribose 1-diphosphate: step 6/9. The chain is Imidazoleglycerol-phosphate dehydratase from Albidiferax ferrireducens (strain ATCC BAA-621 / DSM 15236 / T118) (Rhodoferax ferrireducens).